Reading from the N-terminus, the 550-residue chain is Tyrosinase HcTyr2 (550 aa).

Cu cation contacts are provided by His56, His84, His93, His282, His286, and His326.

The protein belongs to the tyrosinase family. Requires Cu(2+) as cofactor.

The enzyme catalyses L-tyrosine + O2 = L-dopaquinone + H2O. It catalyses the reaction 2 L-tyrosine + O2 = 2 L-dopa. The catalysed reaction is 2 L-dopa + O2 = 2 L-dopaquinone + 2 H2O. Its function is as follows. Copper-containing oxidase that catalyzes the conversion of L-tyrosine to L-dopa and then to L-dopaquinone. Can use various phenols such as p-coumaric acid, phenol, pyrocatechol, syringol or pyrogallol. Accepts several of the constituents of lignin and potentially participates in lignin functionalization. This is Tyrosinase HcTyr2 from Hahella sp. (strain CCB-MM4).